We begin with the raw amino-acid sequence, 89 residues long: Putative septation protein SpoVG (89 aa).

Belongs to the SpoVG family.

Its function is as follows. Could be involved in septation. The polypeptide is Putative septation protein SpoVG (Heliobacterium modesticaldum (strain ATCC 51547 / Ice1)).